A 327-amino-acid polypeptide reads, in one-letter code: Delta(3,5)-Delta(2,4)-dienoyl-CoA isomerase, mitochondrial (327 aa).

The transit peptide at 1–33 (MATAMTVSSKLRGLLMQQLRGTSQLYFNISLRS) directs the protein to the mitochondrion. 115–119 (SGIDL) lines the substrate pocket. Lys-147 carries the post-translational modification N6-acetyllysine. Substrate is bound at residue Gly-173. Lys-230 carries the post-translational modification N6-succinyllysine. Residue Ser-267 is modified to Phosphoserine. Residue Lys-316 is modified to N6-succinyllysine. The Microbody targeting signal signature appears at 325–327 (SKL). The residue at position 326 (Lys-326) is an N6-acetyllysine.

This sequence belongs to the enoyl-CoA hydratase/isomerase family. In terms of assembly, homohexamer.

The protein localises to the mitochondrion. Its subcellular location is the peroxisome. The catalysed reaction is (3E,5Z)-octadienoyl-CoA = (2E,4E)-octadienoyl-CoA. It carries out the reaction (3E,5Z,8Z,11Z,14Z)-eicosapentaenoyl-CoA = (2E,4E,8Z,11Z,14Z)-eicosapentaenoyl-CoA. It participates in lipid metabolism; fatty acid beta-oxidation. In terms of biological role, isomerization of 3-trans,5-cis-dienoyl-CoA to 2-trans,4-trans-dienoyl-CoA. The polypeptide is Delta(3,5)-Delta(2,4)-dienoyl-CoA isomerase, mitochondrial (Mus musculus (Mouse)).